The chain runs to 640 residues: Threonine--tRNA ligase (640 aa).

Positions Met1–Thr61 constitute a TGS domain. Residues Asp242 to Pro533 are catalytic. 3 residues coordinate Zn(2+): Cys333, His384, and His510.

Belongs to the class-II aminoacyl-tRNA synthetase family. As to quaternary structure, homodimer. Zn(2+) serves as cofactor.

It is found in the cytoplasm. The enzyme catalyses tRNA(Thr) + L-threonine + ATP = L-threonyl-tRNA(Thr) + AMP + diphosphate + H(+). In terms of biological role, catalyzes the attachment of threonine to tRNA(Thr) in a two-step reaction: L-threonine is first activated by ATP to form Thr-AMP and then transferred to the acceptor end of tRNA(Thr). Also edits incorrectly charged L-seryl-tRNA(Thr). This Prochlorococcus marinus (strain MIT 9313) protein is Threonine--tRNA ligase.